The chain runs to 426 residues: MSKSENLYSAARELIPGGVNSPVRAFTGVGGTPLFIEKADGAYLYDVDGKAYIDYVGSWGPMVLGHNHPAIRNAVIEAAERGLSFGAPTEMEVKMAELVTNLVPTMDMVRMVNSGTEATMSAIRLARGFTGRDKIIKFEGCYHGHADCLLVKAGSGALTLGQPNSPGVPADFAKHTLTCTYNNLASVRAAFEQYPQEIACIIVEPVAGNMNCVPPLPEFLPGLRALCDEFGALLIIDEVMTGFRVALAGAQDYYGVVPDLTCLGKIIGGGMPVGAFGGRRDVMDALAPTGPVYQAGTLSGNPIAMAAGFACLNEVAQPGIHETLDELTTRLAEGLLEAAEEANIPLVVNHVGGMFGIFFTDAESVTCYQDVMACDVERFKRFFHLMLEEGVYLAPSAFEAGFMSVAHSMDDINNTIDAARRVFATL.

Residue Lys265 is modified to N6-(pyridoxal phosphate)lysine.

The protein belongs to the class-III pyridoxal-phosphate-dependent aminotransferase family. HemL subfamily. Homodimer. Pyridoxal 5'-phosphate is required as a cofactor.

It is found in the cytoplasm. It carries out the reaction (S)-4-amino-5-oxopentanoate = 5-aminolevulinate. It participates in porphyrin-containing compound metabolism; protoporphyrin-IX biosynthesis; 5-aminolevulinate from L-glutamyl-tRNA(Glu): step 2/2. The polypeptide is Glutamate-1-semialdehyde 2,1-aminomutase (Salmonella agona (strain SL483)).